The chain runs to 113 residues: MEAKAVARYIRLSPAKAREVVGLVRGKSVDEALAILRFTPQRAAGAVAKVIKSAAANAEHNNDMDRTRLVVAKVYVDQGPSLKRFRPRAYGRANVIKHRTSHITVIVSDGKEG.

Belongs to the universal ribosomal protein uL22 family. Part of the 50S ribosomal subunit.

Its function is as follows. This protein binds specifically to 23S rRNA; its binding is stimulated by other ribosomal proteins, e.g. L4, L17, and L20. It is important during the early stages of 50S assembly. It makes multiple contacts with different domains of the 23S rRNA in the assembled 50S subunit and ribosome. The globular domain of the protein is located near the polypeptide exit tunnel on the outside of the subunit, while an extended beta-hairpin is found that lines the wall of the exit tunnel in the center of the 70S ribosome. The polypeptide is Large ribosomal subunit protein uL22 (Desulforudis audaxviator (strain MP104C)).